We begin with the raw amino-acid sequence, 1141 residues long: LRR receptor-like serine/threonine-protein kinase RGI1 (1141 aa).

The N-terminal stretch at 1–33 is a signal peptide; the sequence is MSLHSLIFFSSSSSSLLFSFFFIFIFCFSLSDA. Topologically, residues 34 to 726 are extracellular; it reads EQNPEASILY…DASRTRKLRL (693 aa). A disulfide bond links Cys69 and Cys77. Asn71 carries an N-linked (GlcNAc...) asparagine glycan. LRR repeat units follow at residues 80 to 104, 105 to 128, 130 to 152, 153 to 176, 178 to 200, 202 to 225, 226 to 249, 250 to 273, 275 to 297, 298 to 321, 322 to 345, 347 to 369, 370 to 392, 394 to 417, 418 to 441, 443 to 464, 465 to 489, 490 to 513, 514 to 537, 538 to 561, 563 to 585, 586 to 609, 610 to 634, 636 to 657, and 658 to 682; these read QGFITDIDIESVPLQLSLPKNLPAF, RSLQKLTISGANLTGTLPESLGDC, GLKVLDLSSNGLVGDIPWSLSKL, RNLETLILNSNQLTGKIPPDISKC, KLKSLILFDNLLTGSIPTELGKL, GLEVIRIGGNKEISGQIPSEIGDC, SNLTVLGLAETSVSGNLPSSLGKL, KKLETLSIYTTMISGEIPSDLGNC, ELVDLFLYENSLSGSIPREIGQL, TKLEQLFLWQNSLVGGIPEEIGNC, SNLKMIDLSLNLLSGSIPSSIGRL, FLEEFMISDNKFSGSIPTTISNC, SSLVQLQLDKNQISGLIPSELGT, TKLTLFFAWSNQLEGSIPPGLADC, TDLQALDLSRNSLTGTIPSGLFML, NLTKLLLISNSLSGFIPQEIGN, CSSLVRLRLGFNRITGEIPSGIGSL, KKINFLDFSSNRLHGKVPDEIGSC, SELQMIDLSNNSLEGSLPNPVSSL, SGLQVLDVSANQFSGKIPASLGRL, SLNKLILSKNLFSGSIPTSLGMC, SGLQLLDLGSNELSGEIPSELGDI, ENLEIALNLSSNRLTGKIPSKIASL, KLSILDLSHNMLEGDLAPLANI, and ENLVSLNISYNSFSGYLPDNKLFRQ. Asn116 is a glycosylation site (N-linked (GlcNAc...) asparagine). 2 consecutive short sequence motifs (small peptide recognition) follow at residues 185–186 and 207–210; these read FD and RIGG. N-linked (GlcNAc...) asparagine glycosylation is present at Asn227. 2 short sequence motifs (small peptide recognition) span residues 230 to 235 and Tyr258; that span reads VLGLAE. A glycan (N-linked (GlcNAc...) asparagine) is linked at Asn272. A Small peptide recognition motif is present at residues 280 to 282; the sequence is FLY. An N-linked (GlcNAc...) asparagine glycan is attached at Asn320. 2 short sequence motifs (small peptide recognition) span residues 328 to 331 and 350 to 352; these read DLSL and EFM. The N-linked (GlcNAc...) asparagine glycan is linked to Asn368. 2 short sequence motifs (small peptide recognition) span residues 398–402 and 424–427; these read LFFAW and DLSR. Asn443 is a glycosylation site (N-linked (GlcNAc...) asparagine). The Small peptide recognition signature appears at 446 to 450; the sequence is KLLLI. N-linked (GlcNAc...) asparagine glycosylation is present at Asn464. The Small peptide recognition motif lies at 470–472; that stretch reads RLR. N-linked (GlcNAc...) asparagine glycosylation is present at Asn523. N-linked (GlcNAc...) asparagine glycosylation is present at Asn617. A glycan (N-linked (GlcNAc...) asparagine) is linked at Asn664. A helical transmembrane segment spans residues 727-747; that stretch reads TLALLITLTVVLMILGAVAVI. At 748-1141 the chain is on the cytoplasmic side; it reads RARRNIDNER…LLYSSSSSIE (394 aa). In terms of domain architecture, Protein kinase spans 786-1074; sequence LVEPNVIGKG…EIKQEREEYA (289 aa). Residues 792–800 and Lys814 contribute to the ATP site; that span reads IGKGCSGVV. A phosphotyrosine mark is found at Tyr868 and Tyr906. The active-site Proton acceptor is the Asp919. A phosphotyrosine mark is found at Tyr962 and Tyr969.

It belongs to the protein kinase superfamily. Ser/Thr protein kinase family. As to quaternary structure, interacts with beet curly top virus AL4/C4. Binds to RGF peptides such as RGF1, GLV5/CLEL1/RGF2, GLV7/CLEL3/RGF3, GLV3/RGF4, GLV10/CLEL7/RGF5 and RGF10/CLELN; these interactions trigger the formation of heterodimers with SERK1, SERK2 or BAK1/SERK3 via LRR regions. Interacts with UBP13. Phosphorylated and ubiquitinated upon interaction with RGF1, thus leading to activation a subsequent degradation. Stabilized by UBP12 and UBP13-mediated deubiquitination. In terms of processing, autophosphorylated. In terms of tissue distribution, expressed in roots.

The protein resides in the cell membrane. The enzyme catalyses L-seryl-[protein] + ATP = O-phospho-L-seryl-[protein] + ADP + H(+). It catalyses the reaction L-threonyl-[protein] + ATP = O-phospho-L-threonyl-[protein] + ADP + H(+). Functionally, together with RGI2, RGI3, RGI4 and RGI5, acts as a receptor of RGF peptides (e.g. RGF1, GLV5/CLEL1/RGF2, GLV7/CLEL3/RGF3, GLV3/RGF4, GLV10/CLEL7/RGF5 and RGF10/CLELN), peptide hormones which maintain the postembryonic root stem cell niche by regulating the expression levels and patterns of the transcription factor PLETHORA (PLT, e.g. PLT1 and PLT2). Links RGF peptides signal with their downstream components. In Arabidopsis thaliana (Mouse-ear cress), this protein is LRR receptor-like serine/threonine-protein kinase RGI1.